The following is a 601-amino-acid chain: Elongation factor 4 (601 aa).

The tr-type G domain occupies 6 to 188 (EHIRNFSIIA…EIVRKIPAPE (183 aa)). GTP contacts are provided by residues 18–23 (DHGKST) and 135–138 (NKID).

The protein belongs to the TRAFAC class translation factor GTPase superfamily. Classic translation factor GTPase family. LepA subfamily.

The protein resides in the cell inner membrane. It catalyses the reaction GTP + H2O = GDP + phosphate + H(+). In terms of biological role, required for accurate and efficient protein synthesis under certain stress conditions. May act as a fidelity factor of the translation reaction, by catalyzing a one-codon backward translocation of tRNAs on improperly translocated ribosomes. Back-translocation proceeds from a post-translocation (POST) complex to a pre-translocation (PRE) complex, thus giving elongation factor G a second chance to translocate the tRNAs correctly. Binds to ribosomes in a GTP-dependent manner. This Hydrogenovibrio crunogenus (strain DSM 25203 / XCL-2) (Thiomicrospira crunogena) protein is Elongation factor 4.